A 423-amino-acid polypeptide reads, in one-letter code: MAGKRSGWSRAALLQLLLGVNLVVMPPTQARSLRFVTLLYRHGDRSPVKTYPKDPYQEEEWPQGFGQLTKEGMLQHWELGQALRQRYHGFLNTSYHRQEVYVRSTDFDRTLMSAEANLAGLFPPNGMQRFNPNISWQPIPVHTVPITEDRLLKFPLGPCPRYEQLQNETRQTPEYQNESSRNAQFLDMVANETGLTDLTLETVWNVYDTLFCEQTHGLRLPPWASPQTMQRLSRLKDFSFRFLFGIYQQAEKARLQGGVLLAQIRKNLTLMATTSQLPKLLVYSAHDTTLVALQMALDVYNGEQAPYASCHIFELYQEDSGNFSVEMYFRNESDKAPWPLSLPGCPHRCPLQDFLRLTEPVVPKDWQQECQVASGPADTEVIVALAVCGSILFLLIVLLLTVLFRMQAQPPGYRHVADGEDHA.

The first 30 residues, methionine 1–alanine 30, serve as a signal peptide directing secretion. Residues arginine 31–glutamate 380 are Lumenal-facing. The active-site Nucleophile is the histidine 42. Residues asparagine 92, asparagine 133, asparagine 167, asparagine 177, asparagine 191, and asparagine 267 are each glycosylated (N-linked (GlcNAc...) asparagine). 3 disulfides stabilise this stretch: cysteine 159–cysteine 370, cysteine 212–cysteine 310, and cysteine 345–cysteine 349. Aspartate 287 acts as the Proton donor in catalysis. 2 N-linked (GlcNAc...) asparagine glycosylation sites follow: asparagine 322 and asparagine 331. The helical transmembrane segment at valine 381 to threonine 401 threads the bilayer. Residues valine 402–alanine 423 lie on the Cytoplasmic side of the membrane.

Belongs to the histidine acid phosphatase family. The membrane-bound form is converted to the soluble form by sequential proteolytic processing. First, the C-terminal cytoplasmic tail is removed. Cleavage by a lysosomal protease releases the soluble form in the lysosome lumen.

It localises to the lysosome membrane. Its subcellular location is the lysosome lumen. The enzyme catalyses a phosphate monoester + H2O = an alcohol + phosphate. The sequence is that of Lysosomal acid phosphatase (ACP2) from Pongo abelii (Sumatran orangutan).